Here is a 208-residue protein sequence, read N- to C-terminus: Dephospho-CoA kinase (208 aa).

One can recognise a DPCK domain in the interval 3 to 208; sequence EIGLTGGIGS…ALSAAGVTQA (206 aa). Residue 11–16 coordinates ATP; the sequence is GSGKTR.

This sequence belongs to the CoaE family.

It localises to the cytoplasm. The catalysed reaction is 3'-dephospho-CoA + ATP = ADP + CoA + H(+). It functions in the pathway cofactor biosynthesis; coenzyme A biosynthesis; CoA from (R)-pantothenate: step 5/5. Catalyzes the phosphorylation of the 3'-hydroxyl group of dephosphocoenzyme A to form coenzyme A. This is Dephospho-CoA kinase from Cupriavidus pinatubonensis (strain JMP 134 / LMG 1197) (Cupriavidus necator (strain JMP 134)).